Here is a 71-residue protein sequence, read N- to C-terminus: Large ribosomal subunit protein bL31 (71 aa).

The protein belongs to the bacterial ribosomal protein bL31 family. Type A subfamily. In terms of assembly, part of the 50S ribosomal subunit.

Functionally, binds the 23S rRNA. The chain is Large ribosomal subunit protein bL31 from Metamycoplasma arthritidis (strain 158L3-1) (Mycoplasma arthritidis).